The primary structure comprises 38 residues: Photosystem II reaction center protein L (38 aa).

Residues 17-37 traverse the membrane as a helical segment; sequence SLYWGLLLIFVLAILFSSYIF.

It belongs to the PsbL family. PSII is composed of 1 copy each of membrane proteins PsbA, PsbB, PsbC, PsbD, PsbE, PsbF, PsbH, PsbI, PsbJ, PsbK, PsbL, PsbM, PsbT, PsbX, PsbY, PsbZ, Psb30/Ycf12, at least 3 peripheral proteins of the oxygen-evolving complex and a large number of cofactors. It forms dimeric complexes.

It localises to the plastid. Its subcellular location is the chloroplast thylakoid membrane. One of the components of the core complex of photosystem II (PSII). PSII is a light-driven water:plastoquinone oxidoreductase that uses light energy to abstract electrons from H(2)O, generating O(2) and a proton gradient subsequently used for ATP formation. It consists of a core antenna complex that captures photons, and an electron transfer chain that converts photonic excitation into a charge separation. This subunit is found at the monomer-monomer interface and is required for correct PSII assembly and/or dimerization. The polypeptide is Photosystem II reaction center protein L (Mesostigma viride (Green alga)).